An 803-amino-acid chain; its full sequence is Ras GTPase-activating protein 4B (803 aa).

2 consecutive C2 domains span residues 1–105 (MAKR…SGWA) and 116–232 (VQGE…EGWF). Positions 21, 27, 74, 76, 79, 82, 149, 155, 202, 204, 207, and 210 each coordinate Ca(2+). Positions 318-546 (GLAKDFLDLL…AQLKDFITKL (229 aa)) constitute a Ras-GAP domain. The PH domain maps to 566–673 (PPVKEGPLFI…WLSALRKVSI (108 aa)). The segment at 675–711 (NTGLLGSYHPGVFRGDKWSCCHQKEKTGQGCDKTRSR) adopts a Btk-type zinc-finger fold. Zn(2+) contacts are provided by histidine 683, cysteine 694, cysteine 695, and cysteine 705. The tract at residues 781-803 (EAHSSSPAGSPPSEPNCLLELQT) is disordered.

Ca(2+) is required as a cofactor.

The protein localises to the cytoplasm. The protein resides in the cytosol. Its subcellular location is the cell membrane. Functionally, ca(2+)-dependent Ras GTPase-activating protein, that may play a role in the Ras-MAPK pathway. The protein is Ras GTPase-activating protein 4B (RASA4B) of Homo sapiens (Human).